A 449-amino-acid chain; its full sequence is Phosphoglucosamine mutase (449 aa).

Catalysis depends on Ser-100, which acts as the Phosphoserine intermediate. 4 residues coordinate Mg(2+): Ser-100, Asp-241, Asp-243, and Asp-245. Position 100 is a phosphoserine (Ser-100).

Belongs to the phosphohexose mutase family. Requires Mg(2+) as cofactor. Activated by phosphorylation.

It catalyses the reaction alpha-D-glucosamine 1-phosphate = D-glucosamine 6-phosphate. Its function is as follows. Catalyzes the conversion of glucosamine-6-phosphate to glucosamine-1-phosphate. This is Phosphoglucosamine mutase from Clostridium botulinum (strain ATCC 19397 / Type A).